Reading from the N-terminus, the 218-residue chain is Enhancer of split M2 protein (218 aa).

The segment covering M1–K25 has biased composition (low complexity). Disordered regions lie at residues M1–M30, N64–P86, and G137–A164. Low complexity predominate over residues S147 to S163.

Part of the Notch signaling pathway. The sequence is that of Enhancer of split M2 protein from Drosophila melanogaster (Fruit fly).